A 270-amino-acid chain; its full sequence is Molybdenum storage protein subunit beta (270 aa).

Octamer consisting of 4 alpha and 4 beta chains.

The protein resides in the cytoplasm. In terms of biological role, intracellular storage of molybdenum. Binds polyoxomolybdates. Can bind at least 90 molybdenum atoms per protein molecule. The sequence is that of Molybdenum storage protein subunit beta from Azotobacter vinelandii (strain DJ / ATCC BAA-1303).